Here is an 862-residue protein sequence, read N- to C-terminus: MGAIAGEELKKMEKTQVHVAREEKILVLVRLRPLNEKEILANEAADWECINDTTVLYRNTLREGSTFPSAYSFDRVYRGECPTRQVYEDGPKEVALSVVKGINSSIFAYGQTSSGKTYTMSGITEFAVADIFDYIFKHEDRAFVVKFSAIEIYNEAIRDLLSPDSTPLRLRDDPEKGAAVEKATEETLRDWNHLKELISVCEAQRKIGETSLNERSSRSHQIIKLTVESSAREFLGKENSTTLMASVNFIDLAGSERASQALSAGARLKEGCHINRSLLTLGTVIRKLSNGRQGHINYRDSKLTRILQPCLGGNARTAIVCTLSPARSHVEQTRNTLLFACCAKEVTTKAQINVVMSDKALVKQLQRELARLESELRNPAPATSSCDCGVTLRKKDLQIQKMEKQLAEMTKQRDIAQSRLEDFMKMVEHDASSKAGTPHFRNRTNKWEDGSVSEISGVVDPDRTSFISDGTSTPLSTARAHVRSHSDDDLEEEMSPRHSGDQSEEYCKEVQCIEMEESTRDINNDSEERTDAETLLGHNAEANGETGSAQHRIPSSVRSVRRRKSWSRGDTMTGTSTPPDALETDYRGRPEGHGFAFPDLEFGSGGKLLRNDSMTSRGSDSTEAHSIGTPLVGEEGGITSIRSFVEGLKEMVSDPENSGKMRKDIGVDAMEEEVSGTMTNWSEEFERQREQILGLWQTCHVSLVHRTYFFLLFTGDQADSIYIGVELRRLSFMKESFSQGNHAFERGQTLTIASSLKALHRERRMLSKLVGKRFTGEERKRLYQKFGIAVNSKRRRLQLANQLWSKPNDITHAVESAAVVAKLVRFVEQGRAMKEMFGLSFTPPLPTTRRSLNWRKSMATLF.

The Kinesin motor domain maps to 24 to 346 (KILVLVRLRP…LLFACCAKEV (323 aa)). 110 to 117 (GQTSSGKT) contacts ATP. A coiled-coil region spans residues 355–428 (VMSDKALVKQ…RLEDFMKMVE (74 aa)). Disordered regions lie at residues 463 to 505 (RTSF…QSEE) and 542 to 632 (ANGE…TPLV). Positions 465–476 (SFISDGTSTPLS) are enriched in polar residues. The segment covering 494 to 505 (MSPRHSGDQSEE) has biased composition (basic and acidic residues). Over residues 612–621 (DSMTSRGSDS) the composition is skewed to polar residues. Lys-734 participates in a covalent cross-link: Glycyl lysine isopeptide (Lys-Gly) (interchain with G-Cter in ubiquitin).

It belongs to the TRAFAC class myosin-kinesin ATPase superfamily. Kinesin family. KIN-7 subfamily.

The chain is Kinesin-like protein KIN-7E from Arabidopsis thaliana (Mouse-ear cress).